A 209-amino-acid polypeptide reads, in one-letter code: Large ribosomal subunit protein uL3 (209 aa).

At glutamine 150 the chain carries N5-methylglutamine.

It belongs to the universal ribosomal protein uL3 family. As to quaternary structure, part of the 50S ribosomal subunit. Forms a cluster with proteins L14 and L19. Post-translationally, methylated by PrmB.

One of the primary rRNA binding proteins, it binds directly near the 3'-end of the 23S rRNA, where it nucleates assembly of the 50S subunit. The polypeptide is Large ribosomal subunit protein uL3 (Vibrio campbellii (strain ATCC BAA-1116)).